The sequence spans 134 residues: uncharacterized protein (134 aa).

This is an uncharacterized protein from Saccharomyces cerevisiae (strain ATCC 204508 / S288c) (Baker's yeast).